The sequence spans 330 residues: 5'-AMP-activated protein kinase subunit gamma-1 (330 aa).

A compositionally biased stretch (polar residues) spans 1 to 13 (METVTSSDSSSAV). Positions 1 to 26 (METVTSSDSSSAVENEHPQDTPESNN) are disordered. CBS domains lie at 43 to 103 (PTSS…KSAL), 125 to 187 (SFKP…PKPE), and 198 to 260 (IGTY…NLDV). Residues Arg70, 85-90 (MLTITD), Val130, 151-152 (HR), and Lys170 each bind ADP. AMP contacts are provided by residues Arg70, 85–90 (MLTITD), Val130, His151, 151–152 (HR), Lys170, Thr200, Ala205, 226–227 (SA), and 242–245 (SKFD). Residues Arg70, 85–90 (MLTITD), Val130, 151–152 (HR), Arg152, and Lys170 each bind ATP. Residues 138 to 159 (LFDAVSSLIRNKIHRLPVIDPE) carry the AMPK pseudosubstrate motif. 242–245 (SKFD) is a binding site for ADP. 242–245 (SKFD) is a binding site for ATP. The residue at position 261 (Ser261) is a Phosphoserine; by ULK1. Thr263 bears the Phosphothreonine; by ULK1 mark. An ADP-binding site is contributed by Arg269. An AMP-binding site is contributed by Arg269. Arg269 contacts ATP. Ser270 is modified (phosphoserine; by ULK1). The CBS 4 domain maps to 272–329 (YFEGVLKCYLHETLETIINRLVEAEVHRLVVVDENDVVKGIVSLSDILQALVLTGGEK). ADP contacts are provided by residues Leu277 and 298 to 299 (HR). Residues Leu277, His298, 298–299 (HR), and 314–317 (SLSD) each bind AMP. ATP contacts are provided by residues Leu277 and 298–299 (HR).

It belongs to the 5'-AMP-activated protein kinase gamma subunit family. AMPK is a heterotrimer of an alpha catalytic subunit (PRKAA1 or PRKAA2), a beta (PRKAB1 or PRKAB2) and a gamma non-catalytic subunits (PRKAG1, PRKAG2 or PRKAG3). Interacts with FNIP1 and FNIP2. Phosphorylated by ULK1 and ULK2; leading to negatively regulate AMPK activity and suggesting the existence of a regulatory feedback loop between ULK1, ULK2 and AMPK. In terms of processing, glycosylated; O-GlcNAcylated by OGT, promoting the AMP-activated protein kinase (AMPK) activity.

AMP/ATP-binding subunit of AMP-activated protein kinase (AMPK), an energy sensor protein kinase that plays a key role in regulating cellular energy metabolism. In response to reduction of intracellular ATP levels, AMPK activates energy-producing pathways and inhibits energy-consuming processes: inhibits protein, carbohydrate and lipid biosynthesis, as well as cell growth and proliferation. AMPK acts via direct phosphorylation of metabolic enzymes, and by longer-term effects via phosphorylation of transcription regulators. Also acts as a regulator of cellular polarity by remodeling the actin cytoskeleton; probably by indirectly activating myosin. Gamma non-catalytic subunit mediates binding to AMP, ADP and ATP, leading to activate or inhibit AMPK: AMP-binding results in allosteric activation of alpha catalytic subunit (PRKAA1 or PRKAA2) both by inducing phosphorylation and preventing dephosphorylation of catalytic subunits. ADP also stimulates phosphorylation, without stimulating already phosphorylated catalytic subunit. ATP promotes dephosphorylation of catalytic subunit, rendering the AMPK enzyme inactive. This is 5'-AMP-activated protein kinase subunit gamma-1 (PRKAG1) from Sus scrofa (Pig).